The chain runs to 278 residues: uncharacterized protein (278 aa).

The first 32 residues, 1–32 (MSSASFTTKALSVLAALTAASAPLVAASPAHA), serve as a signal peptide directing secretion. Positions 33–236 (LANARNVTGS…HAEWIAYYTG (204 aa)) constitute a Peptidase S1 domain. Cys-59 and Cys-75 are oxidised to a cystine. Residues His-74, Asp-123, and Ser-189 each act as charge relay system in the active site.

The protein belongs to the peptidase S1 family.

Its subcellular location is the secreted. This is an uncharacterized protein from Corynebacterium glutamicum (strain R).